The primary structure comprises 171 residues: Flavodoxin (171 aa).

The region spanning 4–165 is the Flavodoxin-like domain; the sequence is IGIFFGSDTG…RIKQWVKQII (162 aa).

The protein belongs to the flavodoxin family. FMN serves as cofactor.

In terms of biological role, low-potential electron donor to a number of redox enzymes. This chain is Flavodoxin (fldA), found in Buchnera aphidicola subsp. Acyrthosiphon pisum (strain APS) (Acyrthosiphon pisum symbiotic bacterium).